Reading from the N-terminus, the 1496-residue chain is Chromosome partition protein MukB (1496 aa).

63–70 is a binding site for ATP; the sequence is GGNGAGKS. Coiled-coil stretches lie at residues 328 to 493 and 536 to 632; these read KLEL…QRLS and KMQA…APAW. The tract at residues 694–811 is flexible hinge; the sequence is PDGSDDVRLN…EVPLFGRAAR (118 aa). Coiled-coil stretches lie at residues 861-1171 and 1235-1291; these read NPEE…SAEE and IDAI…LQNI. The segment covering 1082–1091 has biased composition (basic and acidic residues); the sequence is RARSRRDELQ. The segment at 1082–1101 is disordered; that stretch reads RARSRRDELQQRLSQQRSRK.

This sequence belongs to the SMC family. MukB subfamily. As to quaternary structure, homodimerization via its hinge domain. Binds to DNA via its C-terminal region. Interacts, and probably forms a ternary complex, with MukE and MukF via its C-terminal region. The complex formation is stimulated by calcium or magnesium. Interacts with tubulin-related protein FtsZ.

It localises to the cytoplasm. It is found in the nucleoid. Functionally, plays a central role in chromosome condensation, segregation and cell cycle progression. Functions as a homodimer, which is essential for chromosome partition. Involved in negative DNA supercoiling in vivo, and by this means organize and compact chromosomes. May achieve or facilitate chromosome segregation by condensation DNA from both sides of a centrally located replisome during cell division. This Actinobacillus pleuropneumoniae serotype 7 (strain AP76) protein is Chromosome partition protein MukB.